Consider the following 120-residue polypeptide: Small ribosomal subunit protein uS13 (120 aa).

The tract at residues 92–120 is disordered; that stretch reads HRKGLPVRGQTTKNNARTRKGKKKTVGSK. Residues 107–120 are compositionally biased toward basic residues; it reads ARTRKGKKKTVGSK.

The protein belongs to the universal ribosomal protein uS13 family. As to quaternary structure, part of the 30S ribosomal subunit. Forms a loose heterodimer with protein S19. Forms two bridges to the 50S subunit in the 70S ribosome.

Located at the top of the head of the 30S subunit, it contacts several helices of the 16S rRNA. In the 70S ribosome it contacts the 23S rRNA (bridge B1a) and protein L5 of the 50S subunit (bridge B1b), connecting the 2 subunits; these bridges are implicated in subunit movement. Contacts the tRNAs in the A and P-sites. The chain is Small ribosomal subunit protein uS13 from Helicobacter pylori (strain J99 / ATCC 700824) (Campylobacter pylori J99).